Consider the following 300-residue polypeptide: Free fatty acid receptor 1 (300 aa).

Over 1–8 (MDLPPQLS) the chain is Extracellular. A helical membrane pass occupies residues 9 to 31 (FALYVSAFALGFPLNLLAIRGAV). The Cytoplasmic portion of the chain corresponds to 32 to 41 (SHAKLRLTPS). The chain crosses the membrane as a helical span at residues 42–64 (LVYTLHLGCSDLLLAITLPLKAV). Over 65-79 (EALASGAWPLPLPFC) the chain is Extracellular. Cysteines 79 and 170 form a disulfide. A helical membrane pass occupies residues 80-101 (PVFALAHFAPLYAGGGFLAALS). Residues 102 to 121 (AGRYLGAAFPFGYQAIRRPR) lie on the Cytoplasmic side of the membrane. Residues 122–142 (YSWGVCVAIWALVLCHLGLAL) traverse the membrane as a helical segment. Over 143 to 178 (GLETSGSWLDNSTSSLGINIPVNGSPVCLEAWDPDS) the chain is Extracellular. An N-linked (GlcNAc...) asparagine glycan is attached at N153. Residues 179 to 200 (ARPARLSFSILLFFLPLVITAF) traverse the membrane as a helical segment. Over 201–223 (CYVGCLRALVRSGLSHKRKLRAA) the chain is Cytoplasmic. A helical membrane pass occupies residues 224–248 (WVAGGALLTLLLCLGPYNASNVASF). The Extracellular portion of the chain corresponds to 249 to 256 (INPDLGGS). Residues 257-279 (WRKLGLITGAWSVVLNPLVTGYL) traverse the membrane as a helical segment. Topologically, residues 280 to 300 (GTGPGRGTICVTRTQRGTIQK) are cytoplasmic.

Belongs to the G-protein coupled receptor 1 family. Expressed in pancreatic islet beta cells (at protein level). Expressed in pancreatic islet beta cells.

It is found in the cell membrane. Its activity is regulated as follows. Is also activated by synthetic agonists, such as AM-8182, AM-6331 and TAK-875 (fasiglifam). AM-8182 is a full agonist, while AM-6331 and TAK-875 (fasiglifam) are partial agonists that potentiate the activity of the endogenous ligands, such as alpha-linolenic acid and gamma-linolenic acid. Its function is as follows. G-protein coupled receptor for medium and long chain saturated and unsaturated fatty acids that plays an important role in glucose homeostasis. Fatty acid binding increases glucose-stimulated insulin secretion, and may also enhance the secretion of glucagon-like peptide 1 (GLP-1). May also play a role in bone homeostasis; receptor signaling activates pathways that inhibit osteoclast differentiation. Ligand binding leads to a conformation change that triggers signaling via G-proteins that activate phospholipase C, leading to an increase of the intracellular calcium concentration. Seems to act through a G(q) and G(i)-mediated pathway. Mediates the anti-inflammatory effects of omega-3 polyunsaturated fatty acids (PUFAs) via inhibition of NLRP3 inflammasome activation. The chain is Free fatty acid receptor 1 (Ffar1) from Mus musculus (Mouse).